A 463-amino-acid chain; its full sequence is MHGSCSFLMLLLPLLLLLVATTGPVGALTDEEKRLMVELHNLYRAQVSPTASDMLHMRWDEELAAFAKAYARQCVWGHNKERGRRGENLFAITDEGMDVPLAMEEWHHEREHYNLSAATCSPGQMCGHYTQVVWAKTERIGCGSHFCEKLQGVEETNIELLVCNYEPPGNVKGKRPYQEGTPCSQCPSGYHCKNSLCEPIGSPEDAQDLPYLVTEAPSFRATEASDSRKMGTPSSLATGIPAFLVTEVSGSLATKALPAVETQAPTSLATKDPPSMATEAPPCVTTEVPSILAAHSLPSLDEEPVTFPKSTHVPIPKSADKVTDKTKVPSRSPENSLDPKMSLTGARELLPHAQEEAEAEAELPPSSEVLASVFPAQDKPGELQATLDHTGHTSSKSLPNFPNTSATANATGGRALALQSSLPGAEGPDKPSVVSGLNSGPGHVWGPLLGLLLLPPLVLAGIF.

The N-terminal stretch at 1-27 (MHGSCSFLMLLLPLLLLLVATTGPVGA) is a signal peptide. The SCP domain maps to 37–165 (VELHNLYRAQ…TNIELLVCNY (129 aa)). The N-linked (GlcNAc...) asparagine glycan is linked to asparagine 114. Disordered regions lie at residues 262–281 (TQAP…TEAP), 303–341 (EPVT…DPKM), and 383–408 (LQAT…SATA). Positions 318 to 327 (SADKVTDKTK) are enriched in basic and acidic residues. The interval 386–395 (TLDHTGHTSS) is O-glycosylated at one site. A compositionally biased stretch (polar residues) spans 392–408 (HTSSKSLPNFPNTSATA). N-linked (GlcNAc...) asparagine glycosylation is found at asparagine 403 and asparagine 409.

It belongs to the CRISP family. As to quaternary structure, interacts with PSP94/MSMB. Post-translationally, N- and O-glycosylated. O-glycosylated with core 1 or possibly core 8 glycans. Expressed in prostate, testis, ovary and intestine. Concentrates in prostate cancer patient's sera.

It localises to the secreted. Its function is as follows. May inhibit cardiomyocyte growth. The protein is Peptidase inhibitor 16 (PI16) of Homo sapiens (Human).